Reading from the N-terminus, the 171-residue chain is Ribosome maturation factor RimM (171 aa).

A PRC barrel domain is found at lysine 97 to leucine 170.

This sequence belongs to the RimM family. Binds ribosomal protein uS19.

The protein localises to the cytoplasm. An accessory protein needed during the final step in the assembly of 30S ribosomal subunit, possibly for assembly of the head region. Essential for efficient processing of 16S rRNA. May be needed both before and after RbfA during the maturation of 16S rRNA. It has affinity for free ribosomal 30S subunits but not for 70S ribosomes. This Azobacteroides pseudotrichonymphae genomovar. CFP2 protein is Ribosome maturation factor RimM.